Here is a 152-residue protein sequence, read N- to C-terminus: Cell division protein SepF (152 aa).

The span at 23 to 32 shows a compositional bias: basic and acidic residues; it reads EVAREPEPMQ. Positions 23-42 are disordered; the sequence is EVAREPEPMQKKTKKEKPSK.

The protein belongs to the SepF family. As to quaternary structure, homodimer. Interacts with FtsZ.

The protein localises to the cytoplasm. Its function is as follows. Cell division protein that is part of the divisome complex and is recruited early to the Z-ring. Probably stimulates Z-ring formation, perhaps through the cross-linking of FtsZ protofilaments. Its function overlaps with FtsA. This is Cell division protein SepF from Listeria innocua serovar 6a (strain ATCC BAA-680 / CLIP 11262).